A 72-amino-acid chain; its full sequence is Dermaseptin AA-3-4 (72 aa).

Residues 1–22 (MAFLKKSLFLVLFLGLVSLSIC) form the signal peptide. The propeptide occupies 23–43 (DEEKRENEDEEEQEDDEQSEE). A disordered region spans residues 24–45 (EEKRENEDEEEQEDDEQSEEKR). Positions 30 to 41 (EDEEEQEDDEQS) are enriched in acidic residues.

The protein belongs to the frog skin active peptide (FSAP) family. As to expression, expressed by the skin glands.

Its subcellular location is the secreted. Functionally, possesses a potent antimicrobial activity against Gram-positive and Gram-negative bacteria. Probably acts by disturbing membrane functions with its amphipathic structure. The protein is Dermaseptin AA-3-4 of Agalychnis annae (Blue-sided leaf frog).